Reading from the N-terminus, the 771-residue chain is Polymeric immunoglobulin receptor (771 aa).

Residues 1 to 18 (MRLYLFTLLVTVFSGVST) form the signal peptide. The Extracellular portion of the chain corresponds to 19-645 (KSPIFGPQEV…DGQSRSSSSK (627 aa)). An Ig-like V-type 1; required for binding to polymeric IgA and IgM domain is found at 21-120 (PIFGPQEVSS…GLGTSNRGLS (100 aa)). A disulfide bridge links Cys-40 with Cys-110. N-linked (GlcNAc...) asparagine glycans are attached at residues Asn-90, Asn-147, Asn-170, and Asn-206. 4 Ig-like V-type domains span residues 135-237 (SDTH…DLQV), 245-351 (LYKD…ESTI), 352-457 (PNRR…LQVA), and 463-563 (PNLE…IYIA). Disulfide bonds link Cys-152-Cys-220, Cys-257-Cys-324, and Cys-370-Cys-440. 2 N-linked (GlcNAc...) asparagine glycosylation sites follow: Asn-420 and Asn-471. Residues Cys-484 and Cys-546 are joined by a disulfide bond. A disordered region spans residues 622 to 641 (QAQENRASGDAGSADGQSRS). Residues 627-641 (RASGDAGSADGQSRS) are compositionally biased toward low complexity. Residues 646–668 (VLFSTLVPLGLVLAVGAIAVWVA) form a helical membrane-spanning segment. The Cytoplasmic segment spans residues 669–771 (RVRHRKNVDR…AQVHDGPQEA (103 aa)). Phosphoserine occurs at positions 680, 689, 696, and 742.

As to quaternary structure, interacts (mainly via CDR1-like domain) with dimeric IgA. Interacts (mainly via CDR2-like domain) with pentameric IgM. Either free or part of the secretory IgA (sIgA) complex that consists of two, four or five IgA monomers, and two additional non-Ig polypeptides, namely the JCHAIN and the secretory component (the proteolytic product of PIGR). Free secretory component interacts with bacterial antigens toxA of C.difficile and eae of E.coli. N-glycosylated. N-glycosylation is required for anchoring IgA molecules to mucus, but is not necessary for Ig binding.

The protein localises to the cell membrane. It is found in the secreted. In terms of biological role, mediates selective transcytosis of polymeric IgA and IgM across mucosal epithelial cells. Binds polymeric IgA and IgM at the basolateral surface of epithelial cells. The complex is then transported across the cell to be secreted at the apical surface. During this process, a cleavage occurs that separates the extracellular (known as the secretory component) from the transmembrane segment. Functionally, through its N-linked glycans ensures anchoring of secretory IgA (sIgA) molecules to mucus lining the epithelial surface to neutralize extracellular pathogens. On its own (free form) may act as a non-specific microbial scavenger to prevent pathogen interaction with epithelial cells. The polypeptide is Polymeric immunoglobulin receptor (Pigr) (Mus musculus (Mouse)).